The chain runs to 881 residues: Nitrate reductase [NADH] 1 (881 aa).

Residues 1 to 46 (MAASVEHRPFTSHQHGVVRSFKSYPDVPRPKKLPLPQPLSDSTNDN) are disordered. Residue Cys167 participates in Mo-molybdopterin binding. The Cytochrome b5 heme-binding domain maps to 515-590 (TKSYSLSEVR…LEDYRIGELM (76 aa)). The heme site is built by His550 and His573. The FAD-binding FR-type domain maps to 625 to 737 (REKIPCKLLS…KGPLGHIEYT (113 aa)). FAD-binding positions include 677-680 (RAYT), 694-698 (VVKVY), Phe699, Phe706, 711-713 (IMS), and Thr764.

It belongs to the nitrate reductase family. Homodimer. It depends on FAD as a cofactor. Heme serves as cofactor. The cofactor is Mo-molybdopterin.

It carries out the reaction nitrite + NAD(+) + H2O = nitrate + NADH + H(+). Its function is as follows. Nitrate reductase is a key enzyme involved in the first step of nitrate assimilation in plants, fungi and bacteria. In Phaseolus vulgaris (Kidney bean), this protein is Nitrate reductase [NADH] 1 (NIA1).